An 86-amino-acid polypeptide reads, in one-letter code: Small ribosomal subunit protein uS15c (86 aa).

This sequence belongs to the universal ribosomal protein uS15 family. As to quaternary structure, part of the 30S ribosomal subunit.

Its subcellular location is the plastid. It localises to the chloroplast. This Cryptomeria japonica (Japanese cedar) protein is Small ribosomal subunit protein uS15c (rps15).